The following is a 490-amino-acid chain: Bifunctional protein GlmU (490 aa).

Positions 1–241 (MSSPGDTAVL…SALVAGVNNR (241 aa)) are pyrophosphorylase. Residues 12–15 (LAAG), lysine 26, glutamine 83, 88–89 (GT), 112–114 (SGD), glycine 151, glutamate 166, asparagine 181, and asparagine 239 each bind UDP-N-acetyl-alpha-D-glucosamine. Aspartate 114 contributes to the Mg(2+) binding site. Asparagine 239 lines the Mg(2+) pocket. Residues 242-262 (VQLAQLGAELNRRIVAAHQLA) are linker. Positions 263–490 (GVTVVDPATT…AGGRPAGEAE (228 aa)) are N-acetyltransferase. Residues arginine 344 and lysine 362 each coordinate UDP-N-acetyl-alpha-D-glucosamine. Catalysis depends on histidine 374, which acts as the Proton acceptor. Positions 377 and 388 each coordinate UDP-N-acetyl-alpha-D-glucosamine. Acetyl-CoA-binding positions include alanine 391, 397–398 (NY), serine 416, and alanine 434. Positions 462–490 (RRKRPGSAAARAAEAAEKAAGGRPAGEAE) are disordered. Over residues 467 to 490 (GSAAARAAEAAEKAAGGRPAGEAE) the composition is skewed to low complexity.

In the N-terminal section; belongs to the N-acetylglucosamine-1-phosphate uridyltransferase family. It in the C-terminal section; belongs to the transferase hexapeptide repeat family. In terms of assembly, homotrimer. Mg(2+) is required as a cofactor.

The protein localises to the cytoplasm. It catalyses the reaction alpha-D-glucosamine 1-phosphate + acetyl-CoA = N-acetyl-alpha-D-glucosamine 1-phosphate + CoA + H(+). The catalysed reaction is N-acetyl-alpha-D-glucosamine 1-phosphate + UTP + H(+) = UDP-N-acetyl-alpha-D-glucosamine + diphosphate. Its pathway is nucleotide-sugar biosynthesis; UDP-N-acetyl-alpha-D-glucosamine biosynthesis; N-acetyl-alpha-D-glucosamine 1-phosphate from alpha-D-glucosamine 6-phosphate (route II): step 2/2. The protein operates within nucleotide-sugar biosynthesis; UDP-N-acetyl-alpha-D-glucosamine biosynthesis; UDP-N-acetyl-alpha-D-glucosamine from N-acetyl-alpha-D-glucosamine 1-phosphate: step 1/1. It participates in bacterial outer membrane biogenesis; LPS lipid A biosynthesis. Functionally, catalyzes the last two sequential reactions in the de novo biosynthetic pathway for UDP-N-acetylglucosamine (UDP-GlcNAc). The C-terminal domain catalyzes the transfer of acetyl group from acetyl coenzyme A to glucosamine-1-phosphate (GlcN-1-P) to produce N-acetylglucosamine-1-phosphate (GlcNAc-1-P), which is converted into UDP-GlcNAc by the transfer of uridine 5-monophosphate (from uridine 5-triphosphate), a reaction catalyzed by the N-terminal domain. The polypeptide is Bifunctional protein GlmU (Mycolicibacterium paratuberculosis (strain ATCC BAA-968 / K-10) (Mycobacterium paratuberculosis)).